The primary structure comprises 490 residues: Aspartyl/glutamyl-tRNA(Asn/Gln) amidotransferase subunit B (490 aa).

The protein belongs to the GatB/GatE family. GatB subfamily. As to quaternary structure, heterotrimer of A, B and C subunits.

The enzyme catalyses L-glutamyl-tRNA(Gln) + L-glutamine + ATP + H2O = L-glutaminyl-tRNA(Gln) + L-glutamate + ADP + phosphate + H(+). It carries out the reaction L-aspartyl-tRNA(Asn) + L-glutamine + ATP + H2O = L-asparaginyl-tRNA(Asn) + L-glutamate + ADP + phosphate + 2 H(+). Its function is as follows. Allows the formation of correctly charged Asn-tRNA(Asn) or Gln-tRNA(Gln) through the transamidation of misacylated Asp-tRNA(Asn) or Glu-tRNA(Gln) in organisms which lack either or both of asparaginyl-tRNA or glutaminyl-tRNA synthetases. The reaction takes place in the presence of glutamine and ATP through an activated phospho-Asp-tRNA(Asn) or phospho-Glu-tRNA(Gln). This Methylobacterium sp. (strain 4-46) protein is Aspartyl/glutamyl-tRNA(Asn/Gln) amidotransferase subunit B.